The chain runs to 210 residues: Large ribosomal subunit protein uL3 (210 aa).

The interval histidine 125 to aspartate 151 is disordered.

This sequence belongs to the universal ribosomal protein uL3 family. Part of the 50S ribosomal subunit. Forms a cluster with proteins L14 and L19.

Its function is as follows. One of the primary rRNA binding proteins, it binds directly near the 3'-end of the 23S rRNA, where it nucleates assembly of the 50S subunit. The chain is Large ribosomal subunit protein uL3 from Roseiflexus sp. (strain RS-1).